The sequence spans 357 residues: FNMESDSFEDFWKGEDLSNYSYSSTLPPFLLDAAPCEPESLEINKYFVVIIYALVFLLSLLGNSLVMLVILYSRVGRSVTDVYLLNLALADLLFALTLPIWAASKVNGWIFGTFLCKVVSLLKEVNFYSGILLLACISVDRYLAIVHATRTLTQKRYLVKFICLSIWGLSLLLALPVLLFRRTVYSSNVSPACYEDMGNNTANWRMLLRILPQSFGFIVPLLIMLFCYGFTLRTLFKAHMGQKHRAMRVIFAVVLIFLLCWLPYNLVLLADTLMRTQVIQETCERRNHIDRALDATEILGILHSCLNPLIYAFIGQKFRHGLLKILAIHGLISKDSLPKDSRPSFVGSSSGHTSTTL.

At Phe-1–Lys-45 the chain is on the extracellular side. An N-linked (GlcNAc...) asparagine glycan is attached at Asn-19. The helical transmembrane segment at Tyr-46 to Tyr-72 threads the bilayer. At Ser-73–Asp-81 the chain is on the cytoplasmic side. The chain crosses the membrane as a helical span at residues Val-82 to Ala-102. At Ala-103–Lys-117 the chain is on the extracellular side. The cysteines at positions 116 and 193 are disulfide-linked. A helical transmembrane segment spans residues Val-118–Val-139. At Asp-140–Lys-160 the chain is on the cytoplasmic side. The chain crosses the membrane as a helical span at residues Phe-161–Phe-180. The Extracellular portion of the chain corresponds to Arg-181–Arg-205. The chain crosses the membrane as a helical span at residues Met-206–Tyr-228. Residues Gly-229–Arg-248 are Cytoplasmic-facing. The helical transmembrane segment at Val-249–Ala-270 threads the bilayer. Topologically, residues Asp-271–Arg-291 are extracellular. The chain crosses the membrane as a helical span at residues Ala-292–Ala-312. The Cytoplasmic portion of the chain corresponds to Phe-313–Leu-357.

It belongs to the G-protein coupled receptor 1 family. In terms of assembly, interacts with IL8. Interacts with GNAI2. Post-translationally, phosphorylated upon ligand binding; which is required for desensitization.

The protein resides in the cell membrane. In terms of biological role, receptor for interleukin-8 which is a powerful neutrophil chemotactic factor. Binding of IL-8 to the receptor causes activation of neutrophils. This response is mediated via a G-protein that activates a phosphatidylinositol-calcium second messenger system. Binds to IL-8 with high affinity. Also binds with high affinity to CXCL3, GRO/MGSA and NAP-2. The chain is C-X-C chemokine receptor type 2 (CXCR2) from Pan troglodytes (Chimpanzee).